Reading from the N-terminus, the 428-residue chain is 3-oxo-tetronate kinase (428 aa).

Residues Ser267, 365–368, and Gly409 contribute to the ATP site; that span reads GGET.

It belongs to the four-carbon acid sugar kinase family.

The enzyme catalyses 3-dehydro-L-erythronate + ATP = 3-dehydro-4-O-phospho-L-erythronate + ADP + H(+). It catalyses the reaction 3-dehydro-D-erythronate + ATP = 3-dehydro-4-O-phospho-D-erythronate + ADP + H(+). In terms of biological role, catalyzes the ATP-dependent phosphorylation of 3-oxo-tetronate to 3-oxo-tetronate 4-phosphate. This is 3-oxo-tetronate kinase from Burkholderia multivorans (strain ATCC 17616 / 249).